The sequence spans 173 residues: 3-hydroxydecanoyl-[acyl-carrier-protein] dehydratase (173 aa).

The active site involves His-71.

Belongs to the thioester dehydratase family. FabA subfamily. In terms of assembly, homodimer.

The protein localises to the cytoplasm. It catalyses the reaction a (3R)-hydroxyacyl-[ACP] = a (2E)-enoyl-[ACP] + H2O. The catalysed reaction is (3R)-hydroxydecanoyl-[ACP] = (2E)-decenoyl-[ACP] + H2O. The enzyme catalyses (2E)-decenoyl-[ACP] = (3Z)-decenoyl-[ACP]. Its pathway is lipid metabolism; fatty acid biosynthesis. Necessary for the introduction of cis unsaturation into fatty acids. Catalyzes the dehydration of (3R)-3-hydroxydecanoyl-ACP to E-(2)-decenoyl-ACP and then its isomerization to Z-(3)-decenoyl-ACP. Can catalyze the dehydratase reaction for beta-hydroxyacyl-ACPs with saturated chain lengths up to 16:0, being most active on intermediate chain length. This is 3-hydroxydecanoyl-[acyl-carrier-protein] dehydratase from Bradyrhizobium diazoefficiens (strain JCM 10833 / BCRC 13528 / IAM 13628 / NBRC 14792 / USDA 110).